The primary structure comprises 221 residues: Cysteine-rich venom protein (221 aa).

Gly1 is a signal peptide. Residues 21-148 (DLHNSLRRSV…EYKYFYVCQY (128 aa)) enclose the SCP domain. Intrachain disulfides connect Cys57-Cys135, Cys74-Cys149, Cys130-Cys146, Cys168-Cys175, Cys171-Cys180, Cys184-Cys216, Cys193-Cys210, and Cys201-Cys214. Residues 184–216 (CTHEDKFTNCKDLVKQGCNNNYLKTNCPASCSC) form the ShKT domain.

Belongs to the CRISP family. As to expression, expressed by the venom gland.

Its subcellular location is the secreted. In terms of biological role, blocks contraction of smooth muscle elicited by high potassium-induced depolarization, but does not block caffeine-stimulated contraction. May target voltage-gated calcium channels in smooth muscle. The sequence is that of Cysteine-rich venom protein from Vipera nikolskii (Nikolsky's adder).